A 308-amino-acid polypeptide reads, in one-letter code: uncharacterized protein (308 aa).

The tract at residues Gly-158–Glu-221 is disordered. Residues Arg-206–Glu-221 show a composition bias toward basic and acidic residues.

This is an uncharacterized protein from Arabidopsis thaliana (Mouse-ear cress).